Here is a 522-residue protein sequence, read N- to C-terminus: N-acetylgalactosamine-6-sulfatase (522 aa).

A signal peptide spans 1–25; it reads MAAVAAATRWHLLLVLSAAGLGVTG. Positions 27 to 379 are catalytic domain; that stretch reads PQPPNILLLL…PAMLQGRLTE (353 aa). Ca(2+) contacts are provided by D38, D39, and C78. C78 serves as the catalytic Nucleophile. 3-oxoalanine (Cys) is present on C78. H141 is a catalytic residue. The N-linked (GlcNAc...) asparagine glycan is linked to N203. Residues D288 and N289 each coordinate Ca(2+). C308 and C419 are disulfide-bonded. Residue N423 is glycosylated (N-linked (GlcNAc...) asparagine). Disulfide bonds link C489/C518 and C501/C507.

It belongs to the sulfatase family. As to quaternary structure, homodimer. Requires Ca(2+) as cofactor. Post-translationally, the conversion to 3-oxoalanine (also known as C-formylglycine, FGly), of a serine or cysteine residue in prokaryotes and of a cysteine residue in eukaryotes, is critical for catalytic activity.

It localises to the lysosome. The enzyme catalyses Hydrolysis of the 6-sulfate groups of the N-acetyl-D-galactosamine 6-sulfate units of chondroitin sulfate and of the D-galactose 6-sulfate units of keratan sulfate.. This Sus scrofa (Pig) protein is N-acetylgalactosamine-6-sulfatase (GALNS).